The primary structure comprises 91 residues: Potassium channel toxin AaTXK-beta (91 aa).

Residues M1 to C19 form the signal peptide. A propeptide spanning residues G20–Q27 is cleaved from the precursor. Residues Q54–F91 form the BetaSPN-type CS-alpha/beta domain. 3 disulfide bridges follow: C57–C78, C64–C83, and C68–C85.

It belongs to the long chain scorpion toxin family. Class 1 subfamily. In terms of assembly, monomer (both chains). In terms of tissue distribution, expressed by the venom gland.

It is found in the secreted. Its function is as follows. Inhibits voltage-gated potassium channels (Kv). Does not activate Kv7 channels. Peptide activator of Kv7.4/KCNQ4 channels. Also acts as a subtype-selective activator of channels formed by Kv7.3/KCNQ3, Kv7.2/Kv7.3 (KCNQ2/KCNQ3), Kv7.5/Kv7.3 (KCNQ3/KCNQ5) subunits. The polypeptide is Potassium channel toxin AaTXK-beta (Androctonus australis (Sahara scorpion)).